A 135-amino-acid chain; its full sequence is MAGRGKAIGAGAAKKATSRSSKAGLQFPVGRIARFLKAGKYAERVGAGAPVYLAAVLEYLAAEVLELAGNAARDNKKTRIVPRHIQLAVRNDEELTKLLGGATIASGGVMPNIHQHLLPKKAGSSKASTVDDDDN.

The protein belongs to the histone H2A family. As to quaternary structure, the nucleosome is a histone octamer containing two molecules each of H2A, H2B, H3 and H4 assembled in one H3-H4 heterotetramer and two H2A-H2B heterodimers. The octamer wraps approximately 147 bp of DNA.

The protein resides in the nucleus. The protein localises to the chromosome. Core component of nucleosome. Nucleosomes wrap and compact DNA into chromatin, limiting DNA accessibility to the cellular machineries which require DNA as a template. Histones thereby play a central role in transcription regulation, DNA repair, DNA replication and chromosomal stability. DNA accessibility is regulated via a complex set of post-translational modifications of histones, also called histone code, and nucleosome remodeling. In Oryza sativa subsp. japonica (Rice), this protein is Probable histone H2A.1.